The following is a 285-amino-acid chain: Acetyl-coenzyme A carboxylase carboxyl transferase subunit beta (285 aa).

The CoA carboxyltransferase N-terminal domain maps to 29 to 285 (IMTKCPKCKK…ILKIHQEVSN (257 aa)). Residues C33, C36, C52, and C55 each contribute to the Zn(2+) site. The C4-type zinc-finger motif lies at 33-55 (CPKCKKIMYTKELNENLNVCFNC).

This sequence belongs to the AccD/PCCB family. Acetyl-CoA carboxylase is a heterohexamer composed of biotin carboxyl carrier protein (AccB), biotin carboxylase (AccC) and two subunits each of ACCase subunit alpha (AccA) and ACCase subunit beta (AccD). The cofactor is Zn(2+).

Its subcellular location is the cytoplasm. The catalysed reaction is N(6)-carboxybiotinyl-L-lysyl-[protein] + acetyl-CoA = N(6)-biotinyl-L-lysyl-[protein] + malonyl-CoA. It participates in lipid metabolism; malonyl-CoA biosynthesis; malonyl-CoA from acetyl-CoA: step 1/1. Functionally, component of the acetyl coenzyme A carboxylase (ACC) complex. Biotin carboxylase (BC) catalyzes the carboxylation of biotin on its carrier protein (BCCP) and then the CO(2) group is transferred by the transcarboxylase to acetyl-CoA to form malonyl-CoA. The sequence is that of Acetyl-coenzyme A carboxylase carboxyl transferase subunit beta from Staphylococcus epidermidis (strain ATCC 12228 / FDA PCI 1200).